Reading from the N-terminus, the 154-residue chain is Endoribonuclease YbeY (154 aa).

Positions 114, 118, and 124 each coordinate Zn(2+).

Belongs to the endoribonuclease YbeY family. The cofactor is Zn(2+).

It is found in the cytoplasm. Functionally, single strand-specific metallo-endoribonuclease involved in late-stage 70S ribosome quality control and in maturation of the 3' terminus of the 16S rRNA. This is Endoribonuclease YbeY from Marinomonas sp. (strain MWYL1).